The following is a 350-amino-acid chain: Biotin synthase (350 aa).

Residues 38–262 (RQVQVSTLLS…MMPTSYVRLS (225 aa)) form the Radical SAM core domain. Cys-53, Cys-57, and Cys-60 together coordinate [4Fe-4S] cluster. Residues Cys-97, Cys-128, Cys-188, and Arg-260 each coordinate [2Fe-2S] cluster.

Belongs to the radical SAM superfamily. Biotin synthase family. As to quaternary structure, homodimer. It depends on [4Fe-4S] cluster as a cofactor. [2Fe-2S] cluster serves as cofactor.

It catalyses the reaction (4R,5S)-dethiobiotin + (sulfur carrier)-SH + 2 reduced [2Fe-2S]-[ferredoxin] + 2 S-adenosyl-L-methionine = (sulfur carrier)-H + biotin + 2 5'-deoxyadenosine + 2 L-methionine + 2 oxidized [2Fe-2S]-[ferredoxin]. The protein operates within cofactor biosynthesis; biotin biosynthesis; biotin from 7,8-diaminononanoate: step 2/2. Functionally, catalyzes the conversion of dethiobiotin (DTB) to biotin by the insertion of a sulfur atom into dethiobiotin via a radical-based mechanism. This chain is Biotin synthase, found in Yersinia enterocolitica serotype O:8 / biotype 1B (strain NCTC 13174 / 8081).